Reading from the N-terminus, the 252-residue chain is Imidazole glycerol phosphate synthase subunit HisF (252 aa).

Catalysis depends on residues Asp-11 and Asp-130.

Belongs to the HisA/HisF family. In terms of assembly, heterodimer of HisH and HisF.

The protein resides in the cytoplasm. It catalyses the reaction 5-[(5-phospho-1-deoxy-D-ribulos-1-ylimino)methylamino]-1-(5-phospho-beta-D-ribosyl)imidazole-4-carboxamide + L-glutamine = D-erythro-1-(imidazol-4-yl)glycerol 3-phosphate + 5-amino-1-(5-phospho-beta-D-ribosyl)imidazole-4-carboxamide + L-glutamate + H(+). The protein operates within amino-acid biosynthesis; L-histidine biosynthesis; L-histidine from 5-phospho-alpha-D-ribose 1-diphosphate: step 5/9. In terms of biological role, IGPS catalyzes the conversion of PRFAR and glutamine to IGP, AICAR and glutamate. The HisF subunit catalyzes the cyclization activity that produces IGP and AICAR from PRFAR using the ammonia provided by the HisH subunit. This Halothermothrix orenii (strain H 168 / OCM 544 / DSM 9562) protein is Imidazole glycerol phosphate synthase subunit HisF.